The primary structure comprises 387 residues: Leucine aminopeptidase 1 (387 aa).

Residues 1–18 (MKFTNLSLLALSASLASA) form the signal peptide. The propeptide occupies 19–86 (RFVEQHETDQ…LGTLRTSSVK (68 aa)). Residue asparagine 179 is glycosylated (N-linked (GlcNAc...) asparagine). Histidine 187, aspartate 206, glutamate 245, and aspartate 272 together coordinate Zn(2+). Cysteines 321 and 325 form a disulfide. Histidine 354 contributes to the Zn(2+) binding site.

The protein belongs to the peptidase M28 family. M28E subfamily. As to quaternary structure, monomer. It depends on Zn(2+) as a cofactor.

The protein localises to the secreted. Its function is as follows. Extracellular aminopeptidase that allows assimilation of proteinaceous substrates. The sequence is that of Leucine aminopeptidase 1 (lap1) from Sclerotinia sclerotiorum (strain ATCC 18683 / 1980 / Ss-1) (White mold).